The primary structure comprises 315 residues: FGFR1 oncogene partner 2 homolog (315 aa).

2 coiled-coil regions span residues 32–99 (EEAE…RAME) and 156–183 (VVQRELQTISQLRLENETLRELLQISKQ). Disordered stretches follow at residues 201–222 (KAVQTDSTADDSADDLSISGAS) and 238–315 (PEQP…APAT). Residues 246–269 (GTTNSFNTAPVHSQSETQAPSVTL) show a composition bias toward polar residues.

The protein belongs to the SIKE family.

In Drosophila melanogaster (Fruit fly), this protein is FGFR1 oncogene partner 2 homolog.